A 235-amino-acid polypeptide reads, in one-letter code: Probable deoxycytidine kinase FPV151 (235 aa).

30–38 (GNISAGKST) serves as a coordination point for ATP. E53, Y68, and Q79 together coordinate substrate. E104 functions as the Proton acceptor in the catalytic mechanism. Substrate contacts are provided by R105, D110, and E172.

It belongs to the DCK/DGK family.

It catalyses the reaction 2'-deoxycytidine + a ribonucleoside 5'-triphosphate = dCMP + a ribonucleoside 5'-diphosphate + H(+). The protein is Probable deoxycytidine kinase FPV151 of Vertebrata (FPV).